The chain runs to 540 residues: GMP synthase [glutamine-hydrolyzing] (540 aa).

Residues isoleucine 26–threonine 216 enclose the Glutamine amidotransferase type-1 domain. Cysteine 103 acts as the Nucleophile in catalysis. Active-site residues include histidine 190 and glutamate 192. A GMPS ATP-PPase domain is found at tryptophan 217–arginine 415. Position 244-250 (serine 244–serine 250) interacts with ATP.

Homodimer.

The catalysed reaction is XMP + L-glutamine + ATP + H2O = GMP + L-glutamate + AMP + diphosphate + 2 H(+). It participates in purine metabolism; GMP biosynthesis; GMP from XMP (L-Gln route): step 1/1. Catalyzes the synthesis of GMP from XMP. The protein is GMP synthase [glutamine-hydrolyzing] of Nostoc sp. (strain PCC 7120 / SAG 25.82 / UTEX 2576).